We begin with the raw amino-acid sequence, 418 residues long: FAD-dependent monooxygenase fmqB (418 aa).

Residues Val12 and Arg68 each contribute to the FAD site. Arg147 is an active-site residue. FAD is bound by residues Asp272 and Gly285.

This sequence belongs to the paxM FAD-dependent monooxygenase family.

It is found in the cytoplasm. The protein operates within alkaloid biosynthesis. Its function is as follows. FAD-dependent monooxygenase; part of the gene cluster that mediates the biosynthesis of the antitumor fumiquinazolines that confer a dual-usage capability to defend against phagocytes in the environment and animal hosts. The simplest member is fumiquinazoline F (FQF) with a 6-6-6 tricyclic core derived from anthranilic acid (Ant), tryptophan (Trp), and alanine (Ala). The trimodular NRPS fmqA is responsible for FQF formation. Modules 1, 2 and 3 of fmqA are predicted to activate and load Ant, Trp and Ala, respectively, providing for the assembly of an Ant-Trp-Ala-S-enzyme intermediate that would undergo double cyclization for chain release and generation of the tricyclic 6-6-6 product fumiquinazoline F. The presence of an E domain predicted for module 2 of fmqA is consistent with epimerization of L-Trp to D-Trp during assembly to generate the R-stereocenter at C14 of FQF. The FAD-dependent monooxygenase fmqB and the monomodular NRPS fmqC then maturate FQF to FQA. FmqB oxidizes the 2',3'-double bond of the indole side chain of FQF, and fmqC activates L-Ala as the adenylate, installs it as the pantetheinyl thioester on its carrier protein domain, and acylates the oxidized indole for subsequent intramolecular cyclization to create the 6-5-5-imidazolindolone of FQA. The FAD-linked oxidoreductase fmqD introduces a third layer of scaffold complexity by converting FQA to the spirohemiaminal FQC, presumably by catalyzing the formation of a transient imine within the pyrazinone ring. FQC subsequently converts nonenzymatically to the known cyclic aminal FQD. This Aspergillus fumigatus (strain ATCC MYA-4609 / CBS 101355 / FGSC A1100 / Af293) (Neosartorya fumigata) protein is FAD-dependent monooxygenase fmqB.